The sequence spans 303 residues: UDP-N-acetylenolpyruvoylglucosamine reductase (303 aa).

The 167-residue stretch at 30 to 196 (IGGPADLLII…LEAVFKLKQD (167 aa)) folds into the FAD-binding PCMH-type domain. Residue arginine 174 is part of the active site. The active-site Proton donor is serine 225. Residue glutamate 295 is part of the active site.

Belongs to the MurB family. The cofactor is FAD.

The protein resides in the cytoplasm. It carries out the reaction UDP-N-acetyl-alpha-D-muramate + NADP(+) = UDP-N-acetyl-3-O-(1-carboxyvinyl)-alpha-D-glucosamine + NADPH + H(+). It functions in the pathway cell wall biogenesis; peptidoglycan biosynthesis. Its function is as follows. Cell wall formation. The protein is UDP-N-acetylenolpyruvoylglucosamine reductase of Bacillus pumilus (strain SAFR-032).